A 198-amino-acid polypeptide reads, in one-letter code: Large ribosomal subunit protein bL12m (198 aa).

Residues 1-36 constitute a mitochondrion transit peptide; that stretch reads MLPSATSLLRGPCLGLRAAALRLVRQQVPHVCAVRL. Over residues 106 to 115 the composition is skewed to low complexity; sequence GAAPAPTAPE. The segment at 106–126 is disordered; it reads GAAPAPTAPEAAEEDVPKQKE. N6-acetyllysine is present on residues Lys-125, Lys-138, Lys-142, and Lys-144. Lys-150 is modified (N6-acetyllysine; alternate). An N6-succinyllysine; alternate modification is found at Lys-150. Lys-150 is covalently cross-linked (Glycyl lysine isopeptide (Lys-Gly) (interchain with G-Cter in ubiquitin)). Lys-162 carries the N6-succinyllysine modification. N6-acetyllysine occurs at positions 163 and 173. Lys-178 carries the N6-acetyllysine; alternate modification. At Lys-178 the chain carries N6-succinyllysine; alternate. The residue at position 185 (Lys-185) is an N6-acetyllysine.

This sequence belongs to the bacterial ribosomal protein bL12 family. In terms of assembly, component of the mitochondrial ribosome large subunit (39S) which comprises a 16S rRNA and about 50 distinct proteins. Interacts with NOA1. In terms of processing, two mature forms are produced by differential two-step proteolytic cleavage. Cleaved by the mitochondrial processing protease to produce the long mature form and subsequently by the mitochondrial intermediate protease to produce the short mature form. In the presence of CUL3, undergoes 'Lys-63'-linked ubiquitination at Lys-150 which results in proteasomal degradation.

It is found in the mitochondrion matrix. As a component of the mitochondrial large ribosomal subunit, plays a role in mitochondrial translation. When present in mitochondria as a free protein not associated with the ribosome, associates with mitochondrial RNA polymerase POLRMT to activate transcription. Required for POLRMT stability. This Bos taurus (Bovine) protein is Large ribosomal subunit protein bL12m (MRPL12).